A 292-amino-acid chain; its full sequence is Large ribosomal subunit protein bL19m (292 aa).

Residues 39 to 68 (GPGRRQITGPSEPGVFQPPPKPVIVDKRGP) are disordered. Position 77 is a phosphoserine (Ser-77).

The protein belongs to the bacterial ribosomal protein bL19 family. In terms of assembly, component of the mitochondrial ribosome large subunit (39S) which comprises a 16S rRNA and about 50 distinct proteins.

The protein localises to the mitochondrion. This Bos taurus (Bovine) protein is Large ribosomal subunit protein bL19m (MRPL19).